Here is a 568-residue protein sequence, read N- to C-terminus: Glucose-6-phosphate isomerase, cytosolic 1 (568 aa).

The active-site Proton donor is the E360. Catalysis depends on residues H391 and K516.

It belongs to the GPI family. As to quaternary structure, homodimer.

The protein resides in the cytoplasm. The catalysed reaction is alpha-D-glucose 6-phosphate = beta-D-fructose 6-phosphate. It participates in carbohydrate degradation; glycolysis; D-glyceraldehyde 3-phosphate and glycerone phosphate from D-glucose: step 2/4. This is Glucose-6-phosphate isomerase, cytosolic 1 (PGIC1) from Clarkia williamsonii.